We begin with the raw amino-acid sequence, 452 residues long: Probable intron-encoded endonuclease 2 (452 aa).

The next 3 membrane-spanning stretches (helical) occupy residues 1–21 (MNIT…NRKN), 22–42 (IILM…LILV), and 57–77 (IYII…LVAF). A ndh-4L exon 1 encoded region spans residues 1–80 (MNITLILFLI…LAILVAFYRL (80 aa)). The interval 81–452 (INSPVKNPRS…SLEGGMNKNI (372 aa)) is ndh-4L intron 1 encoded.

The protein in the N-terminal section; belongs to the complex I subunit 4L family. In the C-terminal section; belongs to the LAGLIDADG endonuclease family.

It localises to the mitochondrion membrane. In terms of biological role, mitochondrial DNA endonuclease involved in intron homing. In Neurospora crassa (strain ATCC 24698 / 74-OR23-1A / CBS 708.71 / DSM 1257 / FGSC 987), this protein is Probable intron-encoded endonuclease 2.